The sequence spans 380 residues: Glucose-1-phosphate adenylyltransferase (380 aa).

Alpha-D-glucose 1-phosphate-binding positions include Gly164, 179–180 (EK), and Ser190.

This sequence belongs to the bacterial/plant glucose-1-phosphate adenylyltransferase family. As to quaternary structure, homotetramer.

The catalysed reaction is alpha-D-glucose 1-phosphate + ATP + H(+) = ADP-alpha-D-glucose + diphosphate. The protein operates within glycan biosynthesis; glycogen biosynthesis. Its function is as follows. Involved in the biosynthesis of ADP-glucose, a building block required for the elongation reactions to produce glycogen. Catalyzes the reaction between ATP and alpha-D-glucose 1-phosphate (G1P) to produce pyrophosphate and ADP-Glc. The protein is Glucose-1-phosphate adenylyltransferase of Streptococcus sanguinis (strain SK36).